Consider the following 1221-residue polypeptide: MSQPPPPPPLPPPPPPPEAPQTSSSLAAAATPGGLSKRRDRRILSGSCPDPKCQARLFFPASGSVSIECTECGQRHEQQQLLGVEEVTDPDVVLHNLLRNALLGVTGAPKKNTELVKVMGLSNYHCKLLSPILARYGMDKQTGRAKLLRDMNQGELFDCALLGDRAFLIEPEHVNTVGYGKDRSGSLLYLHDTLEDIKRANKSQECLIPVHVDGDGHCLVHAVSRALVGRELFWHALRENLKQHFQQHLARYQALFHDFIDAAEWEDIINECDPLFVPPEGVPLGLRNIHIFGLANVLHRPIILLDSLSGMRSSGDYSATFLPGLIPAEKCTGRDGHLNKPICIAWSSSGRNHYIPLVGIKGAALPKLPMNLLPKAWGVPQDLIKKYIKLEEDGGCVIGGDRSLQDKYLLRLVAAMEEVFMDKHGIHPSLVADVHQYFYRRTGVIGVQPEEVTAAAKKAVMDNRLHKCLLCGALSELHVPPEWLAPGGKLYNLAKSTHGQLRPDKNYSFPLNNLVCSYDPVKDVLLPDYGLSNLTACNWCHGTSVRRVRGDGSIVYLDGDRTNSRSTGGKCGCGFKHFWEGKEYDNLPEAFPITLEWGGRVVRETVYWFQYESDPSLNSNVYDVAMKLVTKHFPGEFGSEILVQKVVHTILHQTAKKNPDDYTPVNIDGAHAQRIGDVQGQELESQLPTKIILTGQKTKTLHKEELNMSKTERTIQQNITEQASVMQKRKTEKLKQEQKGQPRTVSPSTIRDGPSSAPATPTKAPYSPTTSKEKKIRITTNDGRQSMVTLKSSTTFFELQESIAREFNIPPYLQCIRYGFPPKELMPPQAGMEKEPVPLQHGDRITIEILKGKAEGGPSTAAHSAHTVRQEEIAVTGKLSSKELQEQADKEMYSLCLLATLMGEDVWSYAKGLPHMFQQGGVFYNIMKKTMGMADGKHCTFPHLPGKTFVYNASEDRLELCVDAAGHFPIGPDVEDLVKEAVSQVRAEATTRSRESSPSHGLLKLGSGGVVKKKSEQLHNVTAFQGKGHSLGTASSNPHMDPRARETLAVRKHNTGTDFSNSSIKTEPPVFTAASSNSELIRIAPGVVTMRDGRQIDPDVVEAQRKKLQEMVSSIQASMDKHLRDQSTEQTPSDLSQRKVEAVSSSVRPGNLQTGLPESFSLTGGTENLNTETTDSRVADVLGAAFATRSKAQKENSMEEPEEMDSQDAETTNTTEPMDHS.

Residues 1–19 are compositionally biased toward pro residues; it reads MSQPPPPPPLPPPPPPPEA. Positions 1–40 are disordered; it reads MSQPPPPPPLPPPPPPPEAPQTSSSLAAAATPGGLSKRRD. Residues 207 to 360 enclose the OTU domain; it reads LIPVHVDGDG…RNHYIPLVGI (154 aa). Residue D215 is part of the active site. C218 functions as the Nucleophile in the catalytic mechanism. The active site involves H353. Position 407 is an N6-acetyllysine (K407). Disordered stretches follow at residues 724–778 and 988–1009; these read SVMQ…KIRI and EATTRSRESSPSHGLLKLGSGG. Residues S746 and S756 each carry the phosphoserine modification. The span at 754–770 shows a compositional bias: low complexity; that stretch reads PSSAPATPTKAPYSPTT. Residue T762 is modified to Phosphothreonine. Residues S767, S993, S997, and S1076 each carry the phosphoserine modification. Disordered regions lie at residues 1117–1177 and 1189–1221; these read ASMD…TDSR and RSKAQKENSMEEPEEMDSQDAETTNTTEPMDHS. The span at 1143 to 1156 shows a compositional bias: polar residues; sequence VSSSVRPGNLQTGL. Residues 1162–1173 show a composition bias toward low complexity; that stretch reads LTGGTENLNTET. Residues S1197 and S1206 each carry the phosphoserine modification. The segment covering 1198–1208 has biased composition (acidic residues); the sequence is MEEPEEMDSQD. Residues 1209-1221 are compositionally biased toward polar residues; that stretch reads AETTNTTEPMDHS.

Binds VCP and the ternary complex containing STX5A, NSFL1C and VCP. Phosphorylated at Ser-1206 by ATM or ATR following induction of covalent DNA-protein cross-links (DPCs). Widely expressed.

Its subcellular location is the nucleus. The protein resides in the cytoplasm. It is found in the endoplasmic reticulum. It localises to the golgi apparatus. The protein localises to the golgi stack. It carries out the reaction Thiol-dependent hydrolysis of ester, thioester, amide, peptide and isopeptide bonds formed by the C-terminal Gly of ubiquitin (a 76-residue protein attached to proteins as an intracellular targeting signal).. Its function is as follows. Deubiquitinating enzyme involved in DNA repair and reassembly of the Golgi apparatus and the endoplasmic reticulum following mitosis. Necessary for VCP-mediated reassembly of Golgi stacks after mitosis. Plays a role in VCP-mediated formation of transitional endoplasmic reticulum (tER). Mediates dissociation of the ternary complex containing STX5A, NSFL1C and VCP. Also involved in DNA repair following phosphorylation by ATM or ATR: acts by catalyzing deubiquitination of SPRTN, thereby promoting SPRTN recruitment to chromatin and subsequent proteolytic cleavage of covalent DNA-protein cross-links (DPCs). Hydrolyzes 'Lys-11'- and 'Lys-48'-linked polyubiquitin chains. This is Deubiquitinating protein VCPIP1 from Rattus norvegicus (Rat).